The sequence spans 991 residues: Translation initiation factor IF-2 (991 aa).

2 disordered regions span residues 126-220 (QADH…DVGE) and 325-359 (VKAA…VDEK). Composition is skewed to polar residues over residues 138-160 (QTES…TEPA) and 201-210 (PAAQTESAVQ). Residues 326–340 (KAAGDGDTAPAADDA) are compositionally biased toward low complexity. Basic residues predominate over residues 343 to 353 (GKKKPGKKKKK). Residues 488–658 (IRPPVVTIMG…LTEAEIRELK (171 aa)) form the tr-type G domain. The G1 stretch occupies residues 497–504 (GHVDHGKT). Residue 497-504 (GHVDHGKT) coordinates GTP. The tract at residues 522-526 (GITQH) is G2. Residues 544-547 (DTPG) are G3. GTP is bound by residues 544 to 548 (DTPGH) and 598 to 601 (NKID). Residues 598–601 (NKID) form a G4 region. The segment at 634–636 (SAK) is G5.

The protein belongs to the TRAFAC class translation factor GTPase superfamily. Classic translation factor GTPase family. IF-2 subfamily.

It is found in the cytoplasm. In terms of biological role, one of the essential components for the initiation of protein synthesis. Protects formylmethionyl-tRNA from spontaneous hydrolysis and promotes its binding to the 30S ribosomal subunits. Also involved in the hydrolysis of GTP during the formation of the 70S ribosomal complex. The polypeptide is Translation initiation factor IF-2 (Chlorobium phaeobacteroides (strain DSM 266 / SMG 266 / 2430)).